The chain runs to 59 residues: Large ribosomal subunit protein uL30 (59 aa).

It belongs to the universal ribosomal protein uL30 family. Part of the 50S ribosomal subunit.

The sequence is that of Large ribosomal subunit protein uL30 from Photobacterium profundum (strain SS9).